The chain runs to 288 residues: Energy-coupling factor transporter ATP-binding protein EcfA2 (288 aa).

Residues 3–246 enclose the ABC transporter domain; it reads ITFDHVSFTY…PAWLKANQLG (244 aa). An ATP-binding site is contributed by 40–47; it reads GHTGSGKS. Catalysis depends on glutamate 171, which acts as the Proton acceptor.

The protein belongs to the ABC transporter superfamily. Energy-coupling factor EcfA family. Forms a stable energy-coupling factor (ECF) transporter complex probably composed of 2 membrane-embedded substrate-binding proteins (S component), 2 ATP-binding proteins (A component) and 2 transmembrane proteins (T component). This complex interacts with a number of substrate-specific components, including FolT and ThiT for 5-formyltetrahydrofolate and thiamine respectively.

The protein resides in the cell membrane. Functionally, ATP-binding (A) component of a common energy-coupling factor (ECF) ABC-transporter complex. Unlike classic ABC transporters this ECF transporter provides the energy necessary to transport a number of different substrates including 5-formyltetrahydrofolate and thiamine. Expression of the complex plus FolT or ThiT in Lactococcus lactis subsp. cremoris (strain NZ9000) allows 5-formyltetrahydrofolate or thiamine uptake respectively; 5-formyltetrahydrofolate or thiamine are not taken up in the absence of FolT/ThiT or the EcfA1A2T complex. Deenergized L.lactis subsp. cremoris (treated with 2-deoxyglucose) do not take up substrate. The polypeptide is Energy-coupling factor transporter ATP-binding protein EcfA2 (Lacticaseibacillus paracasei (strain ATCC 334 / BCRC 17002 / CCUG 31169 / CIP 107868 / KCTC 3260 / NRRL B-441) (Lactobacillus paracasei)).